Here is a 266-residue protein sequence, read N- to C-terminus: tRNA pseudouridine synthase A (266 aa).

D56 (nucleophile) is an active-site residue. Residue Y110 coordinates substrate.

This sequence belongs to the tRNA pseudouridine synthase TruA family.

It carries out the reaction uridine(38/39/40) in tRNA = pseudouridine(38/39/40) in tRNA. Its function is as follows. Formation of pseudouridine at positions 38, 39 and 40 in the anticodon stem and loop of transfer RNAs. The chain is tRNA pseudouridine synthase A from Halobacterium salinarum (strain ATCC 29341 / DSM 671 / R1).